The following is a 346-amino-acid chain: NADH-ubiquinone oxidoreductase chain 2 (346 aa).

10 helical membrane passes run 3 to 23, 25 to 45, 67 to 87, 96 to 116, 122 to 142, 145 to 165, 200 to 220, 238 to 258, 273 to 293, and 324 to 344; these read PIIF…VMIS, HWLL…PIMM, SMLL…WTVM, MLMT…FWVP, IPLS…MSVL, IFPS…ILIG, TLLN…MFMA, IMTI…PLSG, NSII…YFYM, and FLPT…MLSV.

The protein belongs to the complex I subunit 2 family. As to quaternary structure, core subunit of respiratory chain NADH dehydrogenase (Complex I) which is composed of 45 different subunits. Interacts with TMEM242.

The protein localises to the mitochondrion inner membrane. The catalysed reaction is a ubiquinone + NADH + 5 H(+)(in) = a ubiquinol + NAD(+) + 4 H(+)(out). Functionally, core subunit of the mitochondrial membrane respiratory chain NADH dehydrogenase (Complex I) which catalyzes electron transfer from NADH through the respiratory chain, using ubiquinone as an electron acceptor. Essential for the catalytic activity and assembly of complex I. This chain is NADH-ubiquinone oxidoreductase chain 2, found in Bos mutus grunniens (Wild yak).